A 248-amino-acid polypeptide reads, in one-letter code: 23S rRNA (guanosine(2553)-2'-O)-methyltransferase RlmP (248 aa).

S-adenosyl-L-methionine is bound by residues Arg123, Gly204, Val224, and Leu233.

The protein belongs to the class IV-like SAM-binding methyltransferase superfamily. RNA methyltransferase TrmH family. As to quaternary structure, homodimer.

Its subcellular location is the cytoplasm. The enzyme catalyses guanosine(2553) in 23S rRNA + S-adenosyl-L-methionine = 2'-O-methylguanosine(2553) in 23S rRNA + S-adenosyl-L-homocysteine + H(+). Functionally, specifically methylates the ribose of guanosine 2553 (G2553) in 23S rRNA. When the target G2553 is mutated, is able to methylate the ribose of adenosine, but it cannot methylate cytidine nor uridine. Modifies free 23S rRNA but not the fully assembled ribosome nor the 50S subunit, suggesting that the modification occurs early during ribosome biogenesis. This Bacillus subtilis (strain 168) protein is 23S rRNA (guanosine(2553)-2'-O)-methyltransferase RlmP.